The sequence spans 106 residues: Valine dehydrogenase (106 aa).

The active site involves Lys-91.

The protein belongs to the Glu/Leu/Phe/Val dehydrogenases family. As to quaternary structure, homodimer.

It is found in the cytoplasm. The enzyme catalyses L-valine + NAD(+) + H2O = 3-methyl-2-oxobutanoate + NH4(+) + NADH + H(+). It participates in amino-acid degradation; L-valine degradation. Functionally, oxidative deamination of branched-chain amino acids. The catabolism of valine is the major source of fatty acid precursors for macrolide biosynthesis and a vital source of antibiotic precursors. This Streptomyces ambofaciens protein is Valine dehydrogenase (vdh).